A 275-amino-acid polypeptide reads, in one-letter code: Phosphatidylglycerol--prolipoprotein diacylglyceryl transferase (275 aa).

Helical transmembrane passes span 22–42 (LSVR…MWLA), 61–81 (LLFY…VLFY), 96–116 (IWTG…AMIW), 125–145 (FFTV…VGRI), 177–197 (SQLY…NLFW), 204–224 (GAIS…VEFV), and 238–258 (ISMG…MVWA). A 1,2-diacyl-sn-glycero-3-phospho-(1'-sn-glycerol) is bound at residue Arg-144.

Belongs to the Lgt family.

It localises to the cell inner membrane. It catalyses the reaction L-cysteinyl-[prolipoprotein] + a 1,2-diacyl-sn-glycero-3-phospho-(1'-sn-glycerol) = an S-1,2-diacyl-sn-glyceryl-L-cysteinyl-[prolipoprotein] + sn-glycerol 1-phosphate + H(+). It participates in protein modification; lipoprotein biosynthesis (diacylglyceryl transfer). In terms of biological role, catalyzes the transfer of the diacylglyceryl group from phosphatidylglycerol to the sulfhydryl group of the N-terminal cysteine of a prolipoprotein, the first step in the formation of mature lipoproteins. The sequence is that of Phosphatidylglycerol--prolipoprotein diacylglyceryl transferase from Aeromonas salmonicida (strain A449).